Here is a 354-residue protein sequence, read N- to C-terminus: Chorismate synthase (354 aa).

Arg48 lines the NADP(+) pocket. FMN is bound by residues 125–127 (RAS), Gly277, 292–296 (KPIPS), and Arg318.

The protein belongs to the chorismate synthase family. Homotetramer. The cofactor is FMNH2.

The enzyme catalyses 5-O-(1-carboxyvinyl)-3-phosphoshikimate = chorismate + phosphate. The protein operates within metabolic intermediate biosynthesis; chorismate biosynthesis; chorismate from D-erythrose 4-phosphate and phosphoenolpyruvate: step 7/7. In terms of biological role, catalyzes the anti-1,4-elimination of the C-3 phosphate and the C-6 proR hydrogen from 5-enolpyruvylshikimate-3-phosphate (EPSP) to yield chorismate, which is the branch point compound that serves as the starting substrate for the three terminal pathways of aromatic amino acid biosynthesis. This reaction introduces a second double bond into the aromatic ring system. This is Chorismate synthase from Nitratidesulfovibrio vulgaris (strain DP4) (Desulfovibrio vulgaris).